The sequence spans 921 residues: Inter-alpha-trypsin inhibitor heavy chain H4 (921 aa).

Positions 1–27 (MKTLSPTGYGLLLVLPLLLAVLQSTTA) are cleaved as a signal peptide. The VIT domain maps to 28–146 (HKNDINIYSL…KVTFELVYEE (119 aa)). N-linked (GlcNAc...) asparagine glycans are attached at residues asparagine 80, asparagine 205, and asparagine 242. One can recognise a VWFA domain in the interval 270–428 (PKNVIFVIDT…YAFLEKMALE (159 aa)). N-linked (GlcNAc...) asparagine glycosylation is found at asparagine 513 and asparagine 577. The segment at 591–646 (KPEGQEQSQVAEKPVENGNRQGNTHSGHSSFQFHSVGDRTSRLTGGSSVDPVFSHR) is disordered. Polar residues predominate over residues 608-623 (GNRQGNTHSGHSSFQF). Threonine 712 carries an O-linked (GalNAc...) threonine glycan. A disulfide bridge links cysteine 738 with cysteine 916.

Belongs to the ITIH family. As to quaternary structure, interacts (via C-terminus) with DNAJC1 (via SANT 2 domain). Appears to be both N- and O-glycosylated. Post-translationally, cleaved by plasma kallikrein to yield 55- and 25-kDa fragments. As to expression, liver specific.

It is found in the secreted. In terms of biological role, type II acute-phase protein (APP) involved in inflammatory responses to trauma. May also play a role in liver development or regeneration. This chain is Inter-alpha-trypsin inhibitor heavy chain H4 (ITIH4), found in Sus scrofa (Pig).